Here is a 394-residue protein sequence, read N- to C-terminus: Methane monooxygenase component A beta chain (394 aa).

M.trichosporium has two forms of methane monooxygenase, a soluble and a membrane-bound type. The soluble type consists of four components (A to D): protein A, comprising three chains, in an alpha-2, beta-2, gamma-2 configuration, is a nonheme iron protein containing an unusual mu-hydroxo bridge structure at its active site and interacts with both oxygen and methane.

It carries out the reaction methane + NADH + O2 + H(+) = methanol + NAD(+) + H2O. It catalyses the reaction methane + NADPH + O2 + H(+) = methanol + NADP(+) + H2O. Functionally, responsible for the initial oxygenation of methane to methanol in methanotrophs. It also catalyzes the monohydroxylation of a variety of unactivated alkenes, alicyclic, aromatic and heterocyclic compounds. This chain is Methane monooxygenase component A beta chain (mmoY), found in Methylosinus trichosporium.